The chain runs to 330 residues: D-cysteine desulfhydrase (330 aa).

Lys52 carries the post-translational modification N6-(pyridoxal phosphate)lysine.

This sequence belongs to the ACC deaminase/D-cysteine desulfhydrase family. Homodimer. Requires pyridoxal 5'-phosphate as cofactor.

It catalyses the reaction D-cysteine + H2O = hydrogen sulfide + pyruvate + NH4(+) + H(+). In terms of biological role, catalyzes the alpha,beta-elimination reaction of D-cysteine and of several D-cysteine derivatives. It could be a defense mechanism against D-cysteine. This is D-cysteine desulfhydrase from Serratia proteamaculans (strain 568).